A 205-amino-acid polypeptide reads, in one-letter code: N-(5'-phosphoribosyl)anthranilate isomerase (205 aa).

This sequence belongs to the TrpF family.

It catalyses the reaction N-(5-phospho-beta-D-ribosyl)anthranilate = 1-(2-carboxyphenylamino)-1-deoxy-D-ribulose 5-phosphate. It participates in amino-acid biosynthesis; L-tryptophan biosynthesis; L-tryptophan from chorismate: step 3/5. This chain is N-(5'-phosphoribosyl)anthranilate isomerase, found in Clostridium acetobutylicum (strain ATCC 824 / DSM 792 / JCM 1419 / IAM 19013 / LMG 5710 / NBRC 13948 / NRRL B-527 / VKM B-1787 / 2291 / W).